The primary structure comprises 218 residues: Ribose-5-phosphate isomerase A (218 aa).

Substrate-binding positions include 27-30 (TGST), 80-83 (DGAD), and 93-96 (KGGG). Catalysis depends on glutamate 102, which acts as the Proton acceptor. Lysine 120 serves as a coordination point for substrate.

Belongs to the ribose 5-phosphate isomerase family. Homodimer.

It carries out the reaction aldehydo-D-ribose 5-phosphate = D-ribulose 5-phosphate. It functions in the pathway carbohydrate degradation; pentose phosphate pathway; D-ribose 5-phosphate from D-ribulose 5-phosphate (non-oxidative stage): step 1/1. Catalyzes the reversible conversion of ribose-5-phosphate to ribulose 5-phosphate. The polypeptide is Ribose-5-phosphate isomerase A (Picrophilus torridus (strain ATCC 700027 / DSM 9790 / JCM 10055 / NBRC 100828 / KAW 2/3)).